A 312-amino-acid polypeptide reads, in one-letter code: Ribosomal protein L11 methyltransferase (312 aa).

Residues threonine 162, glycine 183, aspartate 205, and asparagine 248 each contribute to the S-adenosyl-L-methionine site.

Belongs to the methyltransferase superfamily. PrmA family.

Its subcellular location is the cytoplasm. It carries out the reaction L-lysyl-[protein] + 3 S-adenosyl-L-methionine = N(6),N(6),N(6)-trimethyl-L-lysyl-[protein] + 3 S-adenosyl-L-homocysteine + 3 H(+). Its function is as follows. Methylates ribosomal protein L11. This Anoxybacillus flavithermus (strain DSM 21510 / WK1) protein is Ribosomal protein L11 methyltransferase.